The chain runs to 427 residues: Enolase (427 aa).

Gln163 contacts (2R)-2-phosphoglycerate. The active-site Proton donor is the Glu205. The Mg(2+) site is built by Asp242, Glu285, and Asp312. 4 residues coordinate (2R)-2-phosphoglycerate: Lys337, Arg366, Ser367, and Lys388. The Proton acceptor role is filled by Lys337.

The protein belongs to the enolase family. Mg(2+) serves as cofactor.

It localises to the cytoplasm. It is found in the secreted. Its subcellular location is the cell surface. The catalysed reaction is (2R)-2-phosphoglycerate = phosphoenolpyruvate + H2O. It functions in the pathway carbohydrate degradation; glycolysis; pyruvate from D-glyceraldehyde 3-phosphate: step 4/5. Its function is as follows. Catalyzes the reversible conversion of 2-phosphoglycerate (2-PG) into phosphoenolpyruvate (PEP). It is essential for the degradation of carbohydrates via glycolysis. This Burkholderia thailandensis (strain ATCC 700388 / DSM 13276 / CCUG 48851 / CIP 106301 / E264) protein is Enolase.